The chain runs to 561 residues: Putative cysteine ligase BshC (561 aa).

The stretch at 472 to 517 (LAQSVEKVMQSTLNQVENLKSKTIKAEKQRHNDLIAQIEKSRDNLL) forms a coiled coil.

This sequence belongs to the BshC family.

This chain is Putative cysteine ligase BshC, found in Chloroherpeton thalassium (strain ATCC 35110 / GB-78).